Consider the following 322-residue polypeptide: Ribose-phosphate pyrophosphokinase (322 aa).

Residues 43 to 45 (DGE) and 102 to 103 (RQ) contribute to the ATP site. 2 residues coordinate Mg(2+): histidine 137 and aspartate 177. The active site involves lysine 201. D-ribose 5-phosphate is bound by residues arginine 203, aspartate 227, and 231 to 235 (DTAGT).

This sequence belongs to the ribose-phosphate pyrophosphokinase family. Class I subfamily. In terms of assembly, homohexamer. The cofactor is Mg(2+).

It localises to the cytoplasm. The enzyme catalyses D-ribose 5-phosphate + ATP = 5-phospho-alpha-D-ribose 1-diphosphate + AMP + H(+). Its pathway is metabolic intermediate biosynthesis; 5-phospho-alpha-D-ribose 1-diphosphate biosynthesis; 5-phospho-alpha-D-ribose 1-diphosphate from D-ribose 5-phosphate (route I): step 1/1. Its function is as follows. Involved in the biosynthesis of the central metabolite phospho-alpha-D-ribosyl-1-pyrophosphate (PRPP) via the transfer of pyrophosphoryl group from ATP to 1-hydroxyl of ribose-5-phosphate (Rib-5-P). The sequence is that of Ribose-phosphate pyrophosphokinase from Xylella fastidiosa (strain 9a5c).